The primary structure comprises 250 residues: Type III pantothenate kinase (250 aa).

13 to 20 (DVGNSYLK) lines the ATP pocket. 110-113 (GNDL) is a binding site for substrate. Catalysis depends on Asp-112, which acts as the Proton acceptor. Thr-134 contacts ATP. Position 186 (Thr-186) interacts with substrate.

The protein belongs to the type III pantothenate kinase family. In terms of assembly, homodimer. NH4(+) serves as cofactor. K(+) is required as a cofactor.

It is found in the cytoplasm. The catalysed reaction is (R)-pantothenate + ATP = (R)-4'-phosphopantothenate + ADP + H(+). It participates in cofactor biosynthesis; coenzyme A biosynthesis; CoA from (R)-pantothenate: step 1/5. Functionally, catalyzes the phosphorylation of pantothenate (Pan), the first step in CoA biosynthesis. The polypeptide is Type III pantothenate kinase (Mycoplasmopsis synoviae (strain 53) (Mycoplasma synoviae)).